Here is a 199-residue protein sequence, read N- to C-terminus: Glycerol-3-phosphate acyltransferase (199 aa).

5 helical membrane passes run 4-24 (FALF…AILI), 56-76 (LAVL…GYYL), 80-100 (QFEL…PIFF), 115-135 (IAPI…FVFL), and 154-176 (YVWW…LIYR).

The protein belongs to the PlsY family. As to quaternary structure, probably interacts with PlsX.

It is found in the cell inner membrane. The enzyme catalyses an acyl phosphate + sn-glycerol 3-phosphate = a 1-acyl-sn-glycero-3-phosphate + phosphate. Its pathway is lipid metabolism; phospholipid metabolism. Catalyzes the transfer of an acyl group from acyl-phosphate (acyl-PO(4)) to glycerol-3-phosphate (G3P) to form lysophosphatidic acid (LPA). This enzyme utilizes acyl-phosphate as fatty acyl donor, but not acyl-CoA or acyl-ACP. The protein is Glycerol-3-phosphate acyltransferase of Haemophilus influenzae (strain PittGG).